The following is a 314-amino-acid chain: 4-hydroxy-3-methylbut-2-enyl diphosphate reductase (314 aa).

Residue Cys12 coordinates [4Fe-4S] cluster. Positions 41 and 74 each coordinate (2E)-4-hydroxy-3-methylbut-2-enyl diphosphate. His41 and His74 together coordinate dimethylallyl diphosphate. The isopentenyl diphosphate site is built by His41 and His74. Cys96 contacts [4Fe-4S] cluster. His124 is a binding site for (2E)-4-hydroxy-3-methylbut-2-enyl diphosphate. His124 contacts dimethylallyl diphosphate. His124 is a binding site for isopentenyl diphosphate. Glu126 (proton donor) is an active-site residue. Thr167 lines the (2E)-4-hydroxy-3-methylbut-2-enyl diphosphate pocket. [4Fe-4S] cluster is bound at residue Cys197. Positions 225, 226, 227, and 269 each coordinate (2E)-4-hydroxy-3-methylbut-2-enyl diphosphate. Dimethylallyl diphosphate-binding residues include Ser225, Ser226, Asn227, and Ser269. Positions 225, 226, 227, and 269 each coordinate isopentenyl diphosphate.

This sequence belongs to the IspH family. It depends on [4Fe-4S] cluster as a cofactor.

It catalyses the reaction isopentenyl diphosphate + 2 oxidized [2Fe-2S]-[ferredoxin] + H2O = (2E)-4-hydroxy-3-methylbut-2-enyl diphosphate + 2 reduced [2Fe-2S]-[ferredoxin] + 2 H(+). It carries out the reaction dimethylallyl diphosphate + 2 oxidized [2Fe-2S]-[ferredoxin] + H2O = (2E)-4-hydroxy-3-methylbut-2-enyl diphosphate + 2 reduced [2Fe-2S]-[ferredoxin] + 2 H(+). It functions in the pathway isoprenoid biosynthesis; dimethylallyl diphosphate biosynthesis; dimethylallyl diphosphate from (2E)-4-hydroxy-3-methylbutenyl diphosphate: step 1/1. Its pathway is isoprenoid biosynthesis; isopentenyl diphosphate biosynthesis via DXP pathway; isopentenyl diphosphate from 1-deoxy-D-xylulose 5-phosphate: step 6/6. In terms of biological role, catalyzes the conversion of 1-hydroxy-2-methyl-2-(E)-butenyl 4-diphosphate (HMBPP) into a mixture of isopentenyl diphosphate (IPP) and dimethylallyl diphosphate (DMAPP). Acts in the terminal step of the DOXP/MEP pathway for isoprenoid precursor biosynthesis. The protein is 4-hydroxy-3-methylbut-2-enyl diphosphate reductase of Glaesserella parasuis serovar 5 (strain SH0165) (Haemophilus parasuis).